Reading from the N-terminus, the 212-residue chain is High frequency lysogenization protein HflD homolog (212 aa).

A coiled-coil region spans residues 92 to 128 (LIALERKLNAKSAALDELGKRIGQLERQLEHFELLSE).

It belongs to the HflD family.

Its subcellular location is the cytoplasm. The protein resides in the cell inner membrane. The sequence is that of High frequency lysogenization protein HflD homolog from Pectobacterium atrosepticum (strain SCRI 1043 / ATCC BAA-672) (Erwinia carotovora subsp. atroseptica).